Here is a 156-residue protein sequence, read N- to C-terminus: Small ribosomal subunit protein uS7 (156 aa).

The protein belongs to the universal ribosomal protein uS7 family. In terms of assembly, part of the 30S ribosomal subunit. Contacts proteins S9 and S11.

In terms of biological role, one of the primary rRNA binding proteins, it binds directly to 16S rRNA where it nucleates assembly of the head domain of the 30S subunit. Is located at the subunit interface close to the decoding center, probably blocks exit of the E-site tRNA. The chain is Small ribosomal subunit protein uS7 from Neisseria meningitidis serogroup C (strain 053442).